A 288-amino-acid polypeptide reads, in one-letter code: Geranylgeranyl diphosphate synthase (288 aa).

Isopentenyl diphosphate is bound by residues Arg43 and His73. Mg(2+) is bound by residues Asp80 and Asp86. Residue Arg91 participates in (2E,6E)-farnesyl diphosphate binding. Residue Arg92 participates in isopentenyl diphosphate binding. The (2E,6E)-farnesyl diphosphate site is built by Lys170, Thr171, and Gln205.

The protein belongs to the FPP/GGPP synthase family. It depends on Mg(2+) as a cofactor.

It carries out the reaction isopentenyl diphosphate + (2E,6E)-farnesyl diphosphate = (2E,6E,10E)-geranylgeranyl diphosphate + diphosphate. It participates in isoprenoid biosynthesis; geranylgeranyl diphosphate biosynthesis; geranylgeranyl diphosphate from farnesyl diphosphate and isopentenyl diphosphate: step 1/1. Its function is as follows. Catalyzes the condensation of farnesyl diphosphate (FPP) and isopentenyl diphosphate (IPP) to yield geranylgeranyl diphosphate (GGPP) needed for biosynthesis of carotenoids and diterpenes. This chain is Geranylgeranyl diphosphate synthase (crtE), found in Cereibacter sphaeroides (strain ATCC 17023 / DSM 158 / JCM 6121 / CCUG 31486 / LMG 2827 / NBRC 12203 / NCIMB 8253 / ATH 2.4.1.) (Rhodobacter sphaeroides).